The chain runs to 286 residues: ATP synthase gamma chain (286 aa).

This sequence belongs to the ATPase gamma chain family. In terms of assembly, F-type ATPases have 2 components, CF(1) - the catalytic core - and CF(0) - the membrane proton channel. CF(1) has five subunits: alpha(3), beta(3), gamma(1), delta(1), epsilon(1). CF(0) has three main subunits: a, b and c.

The protein localises to the cell inner membrane. Functionally, produces ATP from ADP in the presence of a proton gradient across the membrane. The gamma chain is believed to be important in regulating ATPase activity and the flow of protons through the CF(0) complex. This is ATP synthase gamma chain from Pseudomonas putida (strain ATCC 700007 / DSM 6899 / JCM 31910 / BCRC 17059 / LMG 24140 / F1).